Here is a 552-residue protein sequence, read N- to C-terminus: Arginine--tRNA ligase (552 aa).

Positions 123-133 (ANPTGPLTIGR) match the 'HIGH' region motif.

The protein belongs to the class-I aminoacyl-tRNA synthetase family. In terms of assembly, monomer.

Its subcellular location is the cytoplasm. It carries out the reaction tRNA(Arg) + L-arginine + ATP = L-arginyl-tRNA(Arg) + AMP + diphosphate. The polypeptide is Arginine--tRNA ligase (Pelodictyon phaeoclathratiforme (strain DSM 5477 / BU-1)).